A 377-amino-acid polypeptide reads, in one-letter code: Flap endonuclease 1 (377 aa).

Residues 1 to 104 are N-domain; it reads MGIQGLAKLL…GELAKRTERR (104 aa). A Mg(2+)-binding site is contributed by Asp34. DNA is bound by residues Arg47 and Arg70. Mg(2+) is bound by residues Asp86, Glu158, Glu160, Asp179, and Asp181. An I-domain region spans residues 122–253; sequence NIDKFSRRLV…KRSVDLIRQH (132 aa). Glu158 contributes to the DNA binding site. DNA contacts are provided by Gly231 and Asp233. Asp233 serves as a coordination point for Mg(2+). The segment at 336-344 is interaction with PCNA; it reads TQGRLDSFF. A disordered region spans residues 337–377; the sequence is QGRLDSFFKVLPSPANKRKLQDGKGSQNKKAKTGGKFKRPK. Residues 363-377 are compositionally biased toward basic residues; the sequence is QNKKAKTGGKFKRPK.

It belongs to the XPG/RAD2 endonuclease family. FEN1 subfamily. Interacts with PCNA. Three molecules of FEN1 bind to one PCNA trimer with each molecule binding to one PCNA monomer. PCNA stimulates the nuclease activity without altering cleavage specificity. Requires Mg(2+) as cofactor. Phosphorylated. Phosphorylation upon DNA damage induces relocalization to the nuclear plasma.

The protein localises to the nucleus. It is found in the nucleolus. Its subcellular location is the nucleoplasm. It localises to the mitochondrion. Structure-specific nuclease with 5'-flap endonuclease and 5'-3' exonuclease activities involved in DNA replication and repair. During DNA replication, cleaves the 5'-overhanging flap structure that is generated by displacement synthesis when DNA polymerase encounters the 5'-end of a downstream Okazaki fragment. It enters the flap from the 5'-end and then tracks to cleave the flap base, leaving a nick for ligation. Also involved in the long patch base excision repair (LP-BER) pathway, by cleaving within the apurinic/apyrimidinic (AP) site-terminated flap. Acts as a genome stabilization factor that prevents flaps from equilibrating into structures that lead to duplications and deletions. Also possesses 5'-3' exonuclease activity on nicked or gapped double-stranded DNA, and exhibits RNase H activity. Also involved in replication and repair of rDNA and in repairing mitochondrial DNA. The protein is Flap endonuclease 1 of Nematostella vectensis (Starlet sea anemone).